We begin with the raw amino-acid sequence, 636 residues long: Threonine--tRNA ligase (636 aa).

The TGS domain occupies 1–61 (MINITLPDDS…RNDCAVRLIT (61 aa)). The interval 238–528 (DHRKIGTRMG…LVEHFAGKFP (291 aa)) is catalytic. 3 residues coordinate Zn(2+): cysteine 329, histidine 380, and histidine 505.

The protein belongs to the class-II aminoacyl-tRNA synthetase family. In terms of assembly, homodimer. Zn(2+) serves as cofactor.

It is found in the cytoplasm. It catalyses the reaction tRNA(Thr) + L-threonine + ATP = L-threonyl-tRNA(Thr) + AMP + diphosphate + H(+). Functionally, catalyzes the attachment of threonine to tRNA(Thr) in a two-step reaction: L-threonine is first activated by ATP to form Thr-AMP and then transferred to the acceptor end of tRNA(Thr). Also edits incorrectly charged L-seryl-tRNA(Thr). The polypeptide is Threonine--tRNA ligase (Desulforapulum autotrophicum (strain ATCC 43914 / DSM 3382 / VKM B-1955 / HRM2) (Desulfobacterium autotrophicum)).